Here is a 133-residue protein sequence, read N- to C-terminus: Putative N-acetylgalactosamine permease IIC component 2 (133 aa).

Topologically, residues methionine 1 to glutamate 2 are cytoplasmic. The PTS EIIC type-4 domain occupies methionine 1–isoleucine 133. Residues isoleucine 3 to phenylalanine 23 traverse the membrane as a helical segment. Residues asparagine 24 to proline 32 lie on the Periplasmic side of the membrane. The helical transmembrane segment at valine 33 to glycine 53 threads the bilayer. The Cytoplasmic portion of the chain corresponds to glycine 54 to proline 65. A helical membrane pass occupies residues leucine 66–isoleucine 86. At threonine 87–aspartate 93 the chain is on the periplasmic side. A helical membrane pass occupies residues valine 94–phenylalanine 114. The Cytoplasmic portion of the chain corresponds to serine 115–isoleucine 133.

The protein resides in the cell inner membrane. Its function is as follows. The phosphoenolpyruvate-dependent sugar phosphotransferase system (PTS), a major carbohydrate active -transport system, catalyzes the phosphorylation of incoming sugar substrates concomitant with their translocation across the cell membrane. This system is involved in N-acetylgalactosamine transport. This is Putative N-acetylgalactosamine permease IIC component 2 (agaW) from Escherichia coli (strain K12).